We begin with the raw amino-acid sequence, 283 residues long: Protein FAM170B (283 aa).

Basic and acidic residues predominate over residues methionine 1–glutamate 11. Disordered regions lie at residues methionine 1–glycine 58 and alanine 246–glutamine 283.

Belongs to the FAM170 family. In terms of assembly, interacts with GOPC. As to expression, exclusively expressed in adult testis.

Its subcellular location is the cytoplasmic vesicle. It is found in the secretory vesicle. The protein localises to the acrosome. It localises to the acrosome outer membrane. Functionally, plays a role in fertilization through the acrosome reaction. The protein is Protein FAM170B of Homo sapiens (Human).